We begin with the raw amino-acid sequence, 89 residues long: Dynein light chain 1, cytoplasmic (89 aa).

This sequence belongs to the dynein light chain family. In terms of assembly, interacts with mett-10; the interaction is direct, and is required for the nuclear localization of mett-10. Component of a dynein-regulating complex composed of at least bicd-1, dlc-1 and egal-1. Interacts with egal-1 and unc-83. Interacts with fbf-2. In terms of tissue distribution, broadly expressed in tissues including the intestine, body wall muscles, germs cells, oocytes, the rectal valve and cells in the head.

Its subcellular location is the cytoplasm. It localises to the cytoskeleton. It is found in the nucleus envelope. The protein localises to the cytoplasmic granule. In terms of biological role, acts as a non-catalytic accessory component of a dynein complex. Part of a complex with bicd-1 and egal-1, which is recruited to the nuclear envelope by unc-83, where in turn, it recruits dynein to the nuclear surface and regulates nuclear migrations in hypodermal precursor cells. Probably within a dynein motor complex, plays a role in the cell fate specification of the germline and oogenesis. In particular, it inhibits germ cell proliferation. Regulates the function and localization of the RNA-binding protein fbf-2 in the germline. Plays a role in mitotic and meiotic processes. Involved in the pairing of homologous chromosomes. Independently of its dynein-mediated functions, plays a role in germ cell apoptosis. The polypeptide is Dynein light chain 1, cytoplasmic (Caenorhabditis elegans).